The sequence spans 319 residues: Molybdenum cofactor biosynthesis bifunctional protein (319 aa).

The interval 1–145 (MIDVGDKAVT…GKSGHWQRPA (145 aa)) is molybdenum cofactor biosynthesis protein C. Residues 61 to 63 (LCH) and 99 to 100 (ME) contribute to the substrate site. The active site involves D114. The tract at residues 146 to 319 (IAPDVAPTGA…KGADHGTVKG (174 aa)) is molybdenum cofactor biosynthesis protein B.

It in the N-terminal section; belongs to the MoaC family. In the C-terminal section; belongs to the MoaB/Mog family.

The enzyme catalyses (8S)-3',8-cyclo-7,8-dihydroguanosine 5'-triphosphate = cyclic pyranopterin phosphate + diphosphate. It functions in the pathway cofactor biosynthesis; molybdopterin biosynthesis. Catalyzes the conversion of (8S)-3',8-cyclo-7,8-dihydroguanosine 5'-triphosphate to cyclic pyranopterin monophosphate (cPMP). The protein is Molybdenum cofactor biosynthesis bifunctional protein (moaCB) of Synechococcus elongatus (strain ATCC 33912 / PCC 7942 / FACHB-805) (Anacystis nidulans R2).